Here is a 290-residue protein sequence, read N- to C-terminus: NAD kinase (290 aa).

Aspartate 72 acts as the Proton acceptor in catalysis. Residues 72 to 73 (DG), lysine 77, 145 to 146 (NE), aspartate 175, 186 to 191 (TAYSLS), and alanine 210 contribute to the NAD(+) site.

Belongs to the NAD kinase family. The cofactor is a divalent metal cation.

It localises to the cytoplasm. It catalyses the reaction NAD(+) + ATP = ADP + NADP(+) + H(+). Its function is as follows. Involved in the regulation of the intracellular balance of NAD and NADP, and is a key enzyme in the biosynthesis of NADP. Catalyzes specifically the phosphorylation on 2'-hydroxyl of the adenosine moiety of NAD to yield NADP. The protein is NAD kinase of Bacteroides fragilis (strain YCH46).